A 465-amino-acid chain; its full sequence is L-seryl-tRNA(Sec) selenium transferase (465 aa).

Lys-294 bears the N6-(pyridoxal phosphate)lysine mark.

This sequence belongs to the SelA family. Pyridoxal 5'-phosphate is required as a cofactor.

Its subcellular location is the cytoplasm. It carries out the reaction L-seryl-tRNA(Sec) + selenophosphate + H(+) = L-selenocysteinyl-tRNA(Sec) + phosphate. Its pathway is aminoacyl-tRNA biosynthesis; selenocysteinyl-tRNA(Sec) biosynthesis; selenocysteinyl-tRNA(Sec) from L-seryl-tRNA(Sec) (bacterial route): step 1/1. Its function is as follows. Converts seryl-tRNA(Sec) to selenocysteinyl-tRNA(Sec) required for selenoprotein biosynthesis. The sequence is that of L-seryl-tRNA(Sec) selenium transferase from Maridesulfovibrio salexigens (strain ATCC 14822 / DSM 2638 / NCIMB 8403 / VKM B-1763) (Desulfovibrio salexigens).